The following is a 587-amino-acid chain: Mitogen-activated protein kinase 4 (587 aa).

Positions 20–312 constitute a Protein kinase domain; the sequence is FVDFQPLGFG…AEMGLQHPYM (293 aa). Residues 26–34 and Lys-49 each bind ATP; that span reads LGFGVNGLV. The active-site Proton acceptor is the Asp-149. Position 186 is a phosphoserine; by PAK1, PAK2 and PAK3 (Ser-186). The SEG motif signature appears at 186–188; the sequence is SEG. The FRIEDE motif motif lies at 328 to 333; that stretch reads FRIEDE. Composition is skewed to basic and acidic residues over residues 373-383 and 395-413; these read QDASEVQRDPR and VDPR…EQSH. The disordered stretch occupies residues 373-413; the sequence is QDASEVQRDPRAGSAPLAEDVQVDPRKDSHSSSERFLEQSH. Phosphoserine is present on Ser-434. A disordered region spans residues 499–534; that stretch reads STQGGPEHASPPADDPERRLSASPPGRPAPVDGGAS.

The protein belongs to the protein kinase superfamily. CMGC Ser/Thr protein kinase family. MAP kinase subfamily. As to quaternary structure, homodimer. Heterodimer with ERK3/MAPK6. Interacts with (via FRIEDE motif) MAPKAPK5. It depends on Mg(2+) as a cofactor. In terms of processing, phosphorylated at Ser-186 by PAK1, PAK2 and PAK3 resulting in catalytic activation. Phosphorylated by MAPKAPK5 at other sites. As to expression, high expression in heart and brain.

The protein localises to the cytoplasm. Its subcellular location is the nucleus. The catalysed reaction is L-seryl-[protein] + ATP = O-phospho-L-seryl-[protein] + ADP + H(+). It carries out the reaction L-threonyl-[protein] + ATP = O-phospho-L-threonyl-[protein] + ADP + H(+). With respect to regulation, activated by phosphorylation at Ser-186. Its function is as follows. Atypical MAPK protein. Phosphorylates microtubule-associated protein 2 (MAP2) and MAPKAPK5. The precise role of the complex formed with MAPKAPK5 is still unclear, but the complex follows a complex set of phosphorylation events: upon interaction with atypical MAPKAPK5, ERK4/MAPK4 is phosphorylated at Ser-186 and then mediates phosphorylation and activation of MAPKAPK5, which in turn phosphorylates ERK4/MAPK4. May promote entry in the cell cycle. The chain is Mitogen-activated protein kinase 4 (MAPK4) from Homo sapiens (Human).